The chain runs to 163 residues: Putative H/ACA ribonucleoprotein complex subunit 2-like protein (163 aa).

The tract at residues 1–27 (MGKRNLDETMNESTVSEANGDATAPTT) is disordered.

The protein belongs to the eukaryotic ribosomal protein eL8 family. Component of the small nucleolar ribonucleoprotein particle containing H/ACA-type snoRNAs (H/ACA snoRNPs).

The protein resides in the nucleus. The protein localises to the nucleolus. Its function is as follows. Required for ribosome biogenesis. Part of a complex which catalyzes pseudouridylation of rRNA. This involves the isomerization of uridine such that the ribose is subsequently attached to C5, instead of the normal N1. Pseudouridine ('psi') residues may serve to stabilize the conformation of rRNAs. The chain is Putative H/ACA ribonucleoprotein complex subunit 2-like protein from Caenorhabditis elegans.